We begin with the raw amino-acid sequence, 174 residues long: Glyoxylase I 4 (174 aa).

In terms of domain architecture, VOC spans 13–135; sequence SLNHVSVLCR…DGFMIEICNC (123 aa). Glu-131 serves as the catalytic Proton donor/acceptor.

It belongs to the glyoxalase I family. In terms of tissue distribution, mostly expressed in roots, and, to a lower extent, in leaves, flowers, seeds and siliques.

The protein localises to the cell membrane. Its subcellular location is the cytoplasm. In terms of biological role, involved in the detoxification and scavenging of methylglyoxal (MG), a cytotoxic aldehyde produced in response to primary metabolism alteration observed during biotic and abiotic stresses. Modulates cross-talk between salicylic acid (SA) and jasmonic acid (JA) signaling pathways during defense responses to pathogens such as Botrytis cinerea. The chain is Glyoxylase I 4 from Arabidopsis thaliana (Mouse-ear cress).